The chain runs to 268 residues: Octanoyltransferase (268 aa).

A BPL/LPL catalytic domain is found at 73–261 (GEADELVWLL…AFEEVFGPAV (189 aa)). Substrate contacts are provided by residues 112-119 (RGGEYTYH), 192-194 (ALG), and 205-207 (GLS). Cysteine 223 (acyl-thioester intermediate) is an active-site residue.

This sequence belongs to the LipB family.

It localises to the cytoplasm. It catalyses the reaction octanoyl-[ACP] + L-lysyl-[protein] = N(6)-octanoyl-L-lysyl-[protein] + holo-[ACP] + H(+). It functions in the pathway protein modification; protein lipoylation via endogenous pathway; protein N(6)-(lipoyl)lysine from octanoyl-[acyl-carrier-protein]: step 1/2. In terms of biological role, catalyzes the transfer of endogenously produced octanoic acid from octanoyl-acyl-carrier-protein onto the lipoyl domains of lipoate-dependent enzymes. Lipoyl-ACP can also act as a substrate although octanoyl-ACP is likely to be the physiological substrate. This Agrobacterium fabrum (strain C58 / ATCC 33970) (Agrobacterium tumefaciens (strain C58)) protein is Octanoyltransferase.